Here is a 96-residue protein sequence, read N- to C-terminus: Aspartyl/glutamyl-tRNA(Asn/Gln) amidotransferase subunit C (96 aa).

The protein belongs to the GatC family. Heterotrimer of A, B and C subunits.

It carries out the reaction L-glutamyl-tRNA(Gln) + L-glutamine + ATP + H2O = L-glutaminyl-tRNA(Gln) + L-glutamate + ADP + phosphate + H(+). It catalyses the reaction L-aspartyl-tRNA(Asn) + L-glutamine + ATP + H2O = L-asparaginyl-tRNA(Asn) + L-glutamate + ADP + phosphate + 2 H(+). In terms of biological role, allows the formation of correctly charged Asn-tRNA(Asn) or Gln-tRNA(Gln) through the transamidation of misacylated Asp-tRNA(Asn) or Glu-tRNA(Gln) in organisms which lack either or both of asparaginyl-tRNA or glutaminyl-tRNA synthetases. The reaction takes place in the presence of glutamine and ATP through an activated phospho-Asp-tRNA(Asn) or phospho-Glu-tRNA(Gln). The polypeptide is Aspartyl/glutamyl-tRNA(Asn/Gln) amidotransferase subunit C (Geobacillus kaustophilus (strain HTA426)).